Here is a 396-residue protein sequence, read N- to C-terminus: Beta-1,4-galactosyltransferase 3 (396 aa).

The Cytoplasmic portion of the chain corresponds to 1–10 (MLRRLLERPC). The chain crosses the membrane as a helical; Signal-anchor for type II membrane protein span at residues 11–31 (TLALLVGSQLAVMMYLSLGGF). Residues 32-396 (RSLSALFGRE…ANHTAPHGSH (365 aa)) are Lumenal-facing. A glycan (N-linked (GlcNAc...) asparagine) is linked at Asn-57. The cysteines at positions 80 and 122 are disulfide-linked. Residue 133 to 137 (PHRAR) participates in UDP-alpha-D-galactose binding. Asn-169 carries N-linked (GlcNAc...) asparagine glycosylation. UDP-alpha-D-galactose-binding positions include 172 to 174 (FNR), 199 to 200 (VD), Tyr-229, and Trp-261. Residues Cys-193 and Cys-212 are joined by a disulfide bond. Asp-200 is a binding site for Mn(2+). Position 263–266 (263–266 (GEDD)) interacts with N-acetyl-D-glucosamine. His-294 contributes to the Mn(2+) binding site. Position 294–296 (294–296 (HRG)) interacts with UDP-alpha-D-galactose. Arg-306 serves as a coordination point for N-acetyl-D-glucosamine. The N-linked (GlcNAc...) asparagine glycan is linked to Asn-340. The tract at residues 341-396 (ITADIGTDPRGPRTSSGPHYPPGSSQAFRQEMLQRRPPARPGPLPTANHTAPHGSH) is disordered. Positions 353–368 (RTSSGPHYPPGSSQAF) are enriched in polar residues. Asn-388 carries an N-linked (GlcNAc...) asparagine glycan.

Belongs to the glycosyltransferase 7 family. The cofactor is Mn(2+).

Its subcellular location is the golgi apparatus. It is found in the golgi stack membrane. It carries out the reaction an N-acetyl-beta-D-glucosaminyl derivative + UDP-alpha-D-galactose = a beta-D-galactosyl-(1-&gt;4)-N-acetyl-beta-D-glucosaminyl derivative + UDP + H(+). The enzyme catalyses N-acetyl-D-glucosamine + UDP-alpha-D-galactose = beta-D-galactosyl-(1-&gt;4)-N-acetyl-D-glucosamine + UDP + H(+). The catalysed reaction is a beta-D-GlcNAc-(1-&gt;3)-beta-D-Gal-(1-&gt;4)-beta-D-Glc-(1&lt;-&gt;1)-Cer(d18:1(4E)) + UDP-alpha-D-galactose = a neolactoside nLc4Cer(d18:1(4E)) + UDP + H(+). It catalyses the reaction a beta-D-glucosylceramide + UDP-alpha-D-galactose = a beta-D-galactosyl-(1-&gt;4)-beta-D-glucosyl-(1&lt;-&gt;1)-ceramide + UDP + H(+). It carries out the reaction a neolactoside IV(3)-beta-GlcNAc-nLc4Cer + UDP-alpha-D-galactose = a neolactoside nLc6Cer + UDP + H(+). Its pathway is protein modification; protein glycosylation. Functionally, responsible for the synthesis of complex-type N-linked oligosaccharides in many glycoproteins as well as the carbohydrate moieties of glycolipids. This is Beta-1,4-galactosyltransferase 3 (B4GALT3) from Bos taurus (Bovine).